The following is a 510-amino-acid chain: Probable cytosol aminopeptidase (510 aa).

Positions 272 and 277 each coordinate Mn(2+). K284 is a catalytic residue. Mn(2+) contacts are provided by D296, D355, and E357. R359 is an active-site residue.

It belongs to the peptidase M17 family. Mn(2+) is required as a cofactor.

The protein resides in the cytoplasm. It catalyses the reaction Release of an N-terminal amino acid, Xaa-|-Yaa-, in which Xaa is preferably Leu, but may be other amino acids including Pro although not Arg or Lys, and Yaa may be Pro. Amino acid amides and methyl esters are also readily hydrolyzed, but rates on arylamides are exceedingly low.. The catalysed reaction is Release of an N-terminal amino acid, preferentially leucine, but not glutamic or aspartic acids.. Functionally, presumably involved in the processing and regular turnover of intracellular proteins. Catalyzes the removal of unsubstituted N-terminal amino acids from various peptides. The sequence is that of Probable cytosol aminopeptidase from Synechococcus sp. (strain JA-3-3Ab) (Cyanobacteria bacterium Yellowstone A-Prime).